Reading from the N-terminus, the 239-residue chain is Interleukin-27 subunit alpha (239 aa).

Positions 1–28 (MGQMADDLGWRLSLLLLSLLLARAGVWG) are cleaved as a signal peptide. An N-linked (GlcNAc...) asparagine glycan is attached at Asn89. A disordered region spans residues 167 to 186 (EEENEAGRELLPGAPGGPSK).

This sequence belongs to the IL-6 superfamily. As to quaternary structure, heterodimer with EBI3; not disulfide-linked. This heterodimer is known as interleukin IL-27. O-glycosylated.

It localises to the secreted. Its function is as follows. Associates with EBI3 to form the IL-27 interleukin, a heterodimeric cytokine which functions in innate immunity. Cytokine with pro- and anti-inflammatory properties, that can regulate T-helper cell development, suppress T-cell proliferation, stimulate cytotoxic T-cell activity, induce isotype switching in B-cells, and that has diverse effects on innate immune cells. Among its target cells are CD4 T-helper cells which can differentiate in type 1 effector cells (TH1), type 2 effector cells (TH2) and IL17 producing helper T-cells (TH17). It drives rapid clonal expansion of naive but not memory CD4 T-cells. It also strongly synergizes with IL-12 to trigger interferon-gamma/IFN-gamma production of naive CD4 T-cells, binds to the cytokine receptor WSX-1/TCCR which appears to be required but not sufficient for IL-27-mediated signal transduction. IL-27 potentiate the early phase of TH1 response and suppress TH2 and TH17 differentiation. It induces the differentiation of TH1 cells via two distinct pathways, p38 MAPK/TBX21- and ICAM1/ITGAL/ERK-dependent pathways. It also induces STAT1, STAT3, STAT4 and STAT5 phosphorylation and activates TBX21/T-Bet via STAT1 with resulting IL12RB2 up-regulation, an event crucial to TH1 cell commitment. It suppresses the expression of GATA3, the inhibitor TH1 cells development. In CD8 T-cells, it activates STATs as well as GZMB. IL-27 reveals to be a potent inhibitor of TH17 cell development and of IL-17 production. Indeed IL27 alone is also able to inhibit the production of IL17 by CD4 and CD8 T-cells. While IL-27 suppressed the development of pro-inflammatory Th17 cells via STAT1, it inhibits the development of anti-inflammatory inducible regulatory T-cells, iTreg, independently of STAT1. IL-27 also has an effect on cytokine production, it suppresses pro-inflammatory cytokine production such as IL2, IL4, IL5 and IL6 and activates suppressors of cytokine signaling such as SOCS1 and SOCS3. Apart from suppression of cytokine production, IL-27 also antagonizes the effects of some cytokines such as IL6 through direct effects on T-cells. Another important role of IL-27 is its antitumor activity as well as its antiangiogenic activity with activation of production of antiangiogenic chemokines such as IP-10/CXCL10 and MIG/CXCL9. In vein endothelial cells, it induces IRF1/interferon regulatory factor 1 and increase the expression of MHC class II transactivator/CIITA with resulting up-regulation of major histocompatibility complex class II. This Sus scrofa (Pig) protein is Interleukin-27 subunit alpha (IL27).